Here is a 380-residue protein sequence, read N- to C-terminus: N-acetylcysteine deacetylase (380 aa).

Ni(2+) is bound by residues C98, H100, E134, H158, and H350.

Belongs to the peptidase M20 family. A divalent metal cation serves as cofactor.

The enzyme catalyses N-acetyl-L-cysteine + H2O = L-cysteine + acetate. The protein operates within amino-acid biosynthesis; L-cysteine biosynthesis. In terms of biological role, probably catalyzes the deacetylation of N-acetylcysteine (NAC) to acetate and cysteine. Is involved in a S-(2-succino)cysteine (2SC) degradation pathway that allows B.subtilis to grow on 2SC as a sole sulfur source, via its metabolization to cysteine. The protein is N-acetylcysteine deacetylase of Bacillus subtilis (strain 168).